Reading from the N-terminus, the 110-residue chain is Large ribosomal subunit protein uL22 (110 aa).

The protein belongs to the universal ribosomal protein uL22 family. Part of the 50S ribosomal subunit.

Functionally, this protein binds specifically to 23S rRNA; its binding is stimulated by other ribosomal proteins, e.g. L4, L17, and L20. It is important during the early stages of 50S assembly. It makes multiple contacts with different domains of the 23S rRNA in the assembled 50S subunit and ribosome. Its function is as follows. The globular domain of the protein is located near the polypeptide exit tunnel on the outside of the subunit, while an extended beta-hairpin is found that lines the wall of the exit tunnel in the center of the 70S ribosome. The polypeptide is Large ribosomal subunit protein uL22 (Mycoplasmopsis pulmonis (strain UAB CTIP) (Mycoplasma pulmonis)).